A 285-amino-acid chain; its full sequence is Urease accessory protein UreD (285 aa).

It belongs to the UreD family. In terms of assembly, ureD, UreF and UreG form a complex that acts as a GTP-hydrolysis-dependent molecular chaperone, activating the urease apoprotein by helping to assemble the nickel containing metallocenter of UreC. The UreE protein probably delivers the nickel.

Its subcellular location is the cytoplasm. Functionally, required for maturation of urease via the functional incorporation of the urease nickel metallocenter. The polypeptide is Urease accessory protein UreD (Picosynechococcus sp. (strain ATCC 27264 / PCC 7002 / PR-6) (Agmenellum quadruplicatum)).